The chain runs to 65 residues: Large ribosomal subunit protein bL35 (65 aa).

Residues 1 to 10 (MPKMKSKSSA) show a composition bias toward basic residues. The segment at 1 to 21 (MPKMKSKSSAKMRFSVRAGGT) is disordered.

This sequence belongs to the bacterial ribosomal protein bL35 family.

This chain is Large ribosomal subunit protein bL35, found in Polynucleobacter necessarius subsp. necessarius (strain STIR1).